A 199-amino-acid chain; its full sequence is Ras-related and estrogen-regulated growth inhibitor (199 aa).

Residues 13–20 (GRAGVGKS), 60–64 (DTAGQ), and 118–121 (NKAD) contribute to the GTP site.

It belongs to the small GTPase superfamily. Ras family.

The protein resides in the cytoplasm. The enzyme catalyses GTP + H2O = GDP + phosphate + H(+). Binds GDP/GTP and possesses intrinsic GTPase activity. Has higher affinity for GDP than for GTP. This Bos taurus (Bovine) protein is Ras-related and estrogen-regulated growth inhibitor (RERG).